Consider the following 426-residue polypeptide: MATEFTVPDSAARIATAQQAGGGTPVRSGPPDEGGEFSGDRMSLSMGPSHPSTHGVLRIQMELEGEILTKADPIIGYLHRGDEKIAENMTYNQFVPYTDRLDYLAPLANNMAYVIAVEKLAGLTVPPRCQAIRVITAELARISSHLMGLGAFGLDVGAWTVLVLSLNQREFLYNLFEDLTGARFTTSYTRIGGVTRDVPPGWLENVGTFCDKFLPALEEILSLLTRNKIFLDRTVGVGVISKEDAIAYGITGPNARGSGIATDLRKDRPYSGYEQYEFDVPVGTKGDCYDRYLVRGEEMRQSVRIIRQVIKNFPGGDWYATEAKKVFLPPKGKVLSSMEELIQQFMLVTEGPQMPAGEVYFEAENPKGILGFYIVSKGGGVPYRLKIRSPSFCNLSLVPKLCQGVLISDVVAILGSLDFVMGECDR.

Positions 1–51 (MATEFTVPDSAARIATAQQAGGGTPVRSGPPDEGGEFSGDRMSLSMGPSHP) are disordered.

This sequence belongs to the complex I 49 kDa subunit family. In terms of assembly, NDH-1 is composed of 14 different subunits. Subunits NuoB, C, D, E, F, and G constitute the peripheral sector of the complex.

It localises to the cell inner membrane. It carries out the reaction a quinone + NADH + 5 H(+)(in) = a quinol + NAD(+) + 4 H(+)(out). In terms of biological role, NDH-1 shuttles electrons from NADH, via FMN and iron-sulfur (Fe-S) centers, to quinones in the respiratory chain. The immediate electron acceptor for the enzyme in this species is believed to be ubiquinone. Couples the redox reaction to proton translocation (for every two electrons transferred, four hydrogen ions are translocated across the cytoplasmic membrane), and thus conserves the redox energy in a proton gradient. In Opitutus terrae (strain DSM 11246 / JCM 15787 / PB90-1), this protein is NADH-quinone oxidoreductase subunit D 1.